Reading from the N-terminus, the 541-residue chain is Glucose-6-phosphate isomerase (541 aa).

The active-site Proton donor is E346. Residues H377 and K506 contribute to the active site.

It belongs to the GPI family.

The protein resides in the cytoplasm. The enzyme catalyses alpha-D-glucose 6-phosphate = beta-D-fructose 6-phosphate. Its pathway is carbohydrate biosynthesis; gluconeogenesis. The protein operates within carbohydrate degradation; glycolysis; D-glyceraldehyde 3-phosphate and glycerone phosphate from D-glucose: step 2/4. In terms of biological role, catalyzes the reversible isomerization of glucose-6-phosphate to fructose-6-phosphate. The chain is Glucose-6-phosphate isomerase from Agrobacterium fabrum (strain C58 / ATCC 33970) (Agrobacterium tumefaciens (strain C58)).